Consider the following 662-residue polypeptide: Transmembrane 9 superfamily member 2 (662 aa).

The signal sequence occupies residues 1–28; the sequence is MSSRPPASPPAQGSRLLLLSLLLLGTVP. At 29-299 the chain is on the lumenal side; sequence GPRPGSAFYL…LESMPHTHIQ (271 aa). The chain crosses the membrane as a helical span at residues 300–320; the sequence is WFSIMNSLVIVLFLSGMVAMI. The Cytoplasmic segment spans residues 321–373; that stretch reads MLRTLHKDIARYNQMDSTEDAQEEFGWKLVHGDIFRPPRKGMLLSVFLGSGTQ. The helical transmembrane segment at 374–394 threads the bilayer; the sequence is ILIMTFVTLFFACLGFLSPAN. Over 395–397 the chain is Lumenal; it reads RGA. A helical membrane pass occupies residues 398 to 418; that stretch reads LMTCAVVLWVLLGTPAGYVAA. The Cytoplasmic portion of the chain corresponds to 419–436; sequence RFYKSFGGEKWKTNVLLT. Residues 437–457 traverse the membrane as a helical segment; sequence SFLCPGIVFADFFIMNLILWG. The Lumenal portion of the chain corresponds to 458–465; that stretch reads EGSSAAIP. The helical transmembrane segment at 466 to 486 threads the bilayer; sequence FGTLVAILALWFCISVPLTFI. Over 487–521 the chain is Cytoplasmic; the sequence is GAYFGFKKNAIEHPVRTNQIPRQIPEQSFYTKPLP. Residues 522–542 traverse the membrane as a helical segment; it reads GIIMGGILPFGCIFIQLFFIL. Residues 543–553 are Lumenal-facing; it reads NSIWSHQMYYM. Residues 554-574 traverse the membrane as a helical segment; that stretch reads FGFLFLVFIILVITCSEATIL. Topologically, residues 575–590 are cytoplasmic; sequence LCYFHLCAEDYHWQWR. Residues 591–611 traverse the membrane as a helical segment; that stretch reads SFLTSGFTAVYFLIYAIHYFF. Residues 612-630 are Lumenal-facing; sequence SKLQITGTASTILYFGYTM. Residues 631-651 traverse the membrane as a helical segment; sequence IMVLIFFLFTGTIGFFACFWF. The Cytoplasmic segment spans residues 652-662; that stretch reads VTKIYSVVKVD.

The protein belongs to the nonaspanin (TM9SF) (TC 9.A.2) family.

It localises to the endosome membrane. The protein resides in the golgi outpost. Its subcellular location is the cytoplasm. The protein localises to the cytoskeleton. It is found in the microtubule organizing center. Functionally, in the intracellular compartments, may function as a channel or small molecule transporter. This Mus musculus (Mouse) protein is Transmembrane 9 superfamily member 2 (Tm9sf2).